Consider the following 214-residue polypeptide: ATP phosphoribosyltransferase (214 aa).

This sequence belongs to the ATP phosphoribosyltransferase family. Short subfamily. In terms of assembly, heteromultimer composed of HisG and HisZ subunits.

The protein localises to the cytoplasm. The enzyme catalyses 1-(5-phospho-beta-D-ribosyl)-ATP + diphosphate = 5-phospho-alpha-D-ribose 1-diphosphate + ATP. The protein operates within amino-acid biosynthesis; L-histidine biosynthesis; L-histidine from 5-phospho-alpha-D-ribose 1-diphosphate: step 1/9. Its function is as follows. Catalyzes the condensation of ATP and 5-phosphoribose 1-diphosphate to form N'-(5'-phosphoribosyl)-ATP (PR-ATP). Has a crucial role in the pathway because the rate of histidine biosynthesis seems to be controlled primarily by regulation of HisG enzymatic activity. The sequence is that of ATP phosphoribosyltransferase from Deinococcus deserti (strain DSM 17065 / CIP 109153 / LMG 22923 / VCD115).